Consider the following 555-residue polypeptide: Synaptotagmin-14 (555 aa).

Topologically, residues 1–24 (MAIEGGERTCGVHELICIRKVSPE) are extracellular. A helical; Signal-anchor for type III membrane protein membrane pass occupies residues 25–47 (AVGFLSAVGVFIVLMLLLFLYIN). The Cytoplasmic portion of the chain corresponds to 48-555 (KKFCFENVGG…VCRWHALLES (508 aa)). Disordered regions lie at residues 76–97 (YNSY…EALG), 157–179 (TPPL…HLSC), and 205–258 (CPSE…PEPE). Residues 211–224 (TGHEAESYHNKGYE) show a composition bias toward basic and acidic residues. C2 domains lie at 260–379 (KYGT…SLPV) and 415–550 (SVPE…CRWH).

This sequence belongs to the synaptotagmin family. As to quaternary structure, homodimer. Can also form heterodimers. Expressed in heart and testis. Expressed in brain (especially in the cerebellum).

The protein localises to the membrane. Functionally, may be involved in the trafficking and exocytosis of secretory vesicles in non-neuronal tissues. Is Ca(2+)-independent. The protein is Synaptotagmin-14 (Syt14) of Mus musculus (Mouse).